The chain runs to 187 residues: Transmembrane protein 11-B, mitochondrial (187 aa).

The next 2 helical transmembrane spans lie at 79–95 and 102–119; these read TAVL…LALP and VSLP…LYGI.

Belongs to the TMEM11 family.

The protein resides in the mitochondrion inner membrane. Functionally, plays a role in mitochondrial morphogenesis. The chain is Transmembrane protein 11-B, mitochondrial (tmem11-b) from Xenopus laevis (African clawed frog).